The primary structure comprises 281 residues: NAD-dependent protein deacetylase 1 (281 aa).

One can recognise a Deacetylase sirtuin-type domain in the interval methionine 1 to leucine 281. NAD(+) is bound by residues glycine 24 to asparagine 44 and glutamine 102 to aspartate 105. The active-site Proton acceptor is the histidine 120. The Zn(2+) site is built by cysteine 128, cysteine 131, cysteine 183, and cysteine 186. Residues glycine 224–serine 226, asparagine 250–glycine 252, and valine 268 each bind NAD(+).

Belongs to the sirtuin family. Class II subfamily. The cofactor is Zn(2+).

The protein resides in the cytoplasm. It carries out the reaction N(6)-acetyl-L-lysyl-[protein] + NAD(+) + H2O = 2''-O-acetyl-ADP-D-ribose + nicotinamide + L-lysyl-[protein]. In terms of biological role, NAD-dependent protein deacetylase which modulates the activities of several enzymes which are inactive in their acetylated form. The sequence is that of NAD-dependent protein deacetylase 1 from Corynebacterium efficiens (strain DSM 44549 / YS-314 / AJ 12310 / JCM 11189 / NBRC 100395).